Reading from the N-terminus, the 76-residue chain is Conotoxin TxMEKL-011 (76 aa).

Residues 1–19 (MEKLTILLLVAAVLMSTQA) form the signal peptide. Residues 20–45 (LVERAGENRSKENIKFLLKRKRAADR) constitute a propeptide that is removed on maturation. Disulfide bonds link Cys51/Cys65, Cys58/Cys69, and Cys64/Cys73.

The protein belongs to the conotoxin O2 superfamily. As to expression, expressed by the venom duct.

It localises to the secreted. The sequence is that of Conotoxin TxMEKL-011 from Conus textile (Cloth-of-gold cone).